The chain runs to 334 residues: Transcription initiation factor IIB (334 aa).

Residues Thr34–Asp65 form a TFIIB-type zinc finger. Zn(2+) contacts are provided by Cys38, Cys41, Cys57, and Cys60. 2 tandem repeats follow at residues Ser151–Leu234 and Asp245–Glu326.

The protein belongs to the TFIIB family.

In terms of biological role, stabilizes TBP binding to an archaeal box-A promoter. Also responsible for recruiting RNA polymerase II to the pre-initiation complex (DNA-TBP-TFIIB). The chain is Transcription initiation factor IIB from Methanoregula boonei (strain DSM 21154 / JCM 14090 / 6A8).